The following is a 345-amino-acid chain: N-acetyl-gamma-glutamyl-phosphate reductase (345 aa).

Cys-149 is an active-site residue.

This sequence belongs to the NAGSA dehydrogenase family. Type 1 subfamily.

The protein resides in the cytoplasm. The catalysed reaction is N-acetyl-L-glutamate 5-semialdehyde + phosphate + NADP(+) = N-acetyl-L-glutamyl 5-phosphate + NADPH + H(+). It participates in amino-acid biosynthesis; L-arginine biosynthesis; N(2)-acetyl-L-ornithine from L-glutamate: step 3/4. Catalyzes the NADPH-dependent reduction of N-acetyl-5-glutamyl phosphate to yield N-acetyl-L-glutamate 5-semialdehyde. The chain is N-acetyl-gamma-glutamyl-phosphate reductase from Janthinobacterium sp. (strain Marseille) (Minibacterium massiliensis).